The following is a 55-amino-acid chain: Small polypeptide DEVIL 10 (55 aa).

A glycan (N-linked (GlcNAc...) asparagine) is linked at asparagine 7. Positions 19–50 (RFGDRCLLMAKQQRTRLYILRRCVSMLLCWHD) are required for DVL/RTFL small polypeptide activity. The helical transmembrane segment at 32–48 (RTRLYILRRCVSMLLCW) threads the bilayer.

The protein belongs to the DVL/RTFL small polypeptides family.

It is found in the cell membrane. Its function is as follows. Small polypeptide acting as a regulatory molecule which coordinates cellular responses required for differentiation, growth and development, probably by restricting polar cell proliferation in lateral organs and coordinating socket cell recruitment and differentiation at trichome sites. The sequence is that of Small polypeptide DEVIL 10 from Arabidopsis thaliana (Mouse-ear cress).